We begin with the raw amino-acid sequence, 236 residues long: Ubiquinone biosynthesis O-methyltransferase (236 aa).

Positions 36, 56, 77, and 125 each coordinate S-adenosyl-L-methionine.

The protein belongs to the methyltransferase superfamily. UbiG/COQ3 family.

It carries out the reaction a 3-demethylubiquinol + S-adenosyl-L-methionine = a ubiquinol + S-adenosyl-L-homocysteine + H(+). The catalysed reaction is a 3-(all-trans-polyprenyl)benzene-1,2-diol + S-adenosyl-L-methionine = a 2-methoxy-6-(all-trans-polyprenyl)phenol + S-adenosyl-L-homocysteine + H(+). It functions in the pathway cofactor biosynthesis; ubiquinone biosynthesis. Its function is as follows. O-methyltransferase that catalyzes the 2 O-methylation steps in the ubiquinone biosynthetic pathway. The protein is Ubiquinone biosynthesis O-methyltransferase of Glaesserella parasuis serovar 5 (strain SH0165) (Haemophilus parasuis).